Consider the following 239-residue polypeptide: Fatty acid metabolism regulator protein (239 aa).

An HTH gntR-type domain is found at 6–74 (QSPAGFAEEY…HGKPTKVNNF (69 aa)). The segment at residues 34 to 53 (ERELSELIGVTRTTLREVLQ) is a DNA-binding region (H-T-H motif).

Homodimer.

The protein resides in the cytoplasm. Multifunctional regulator of fatty acid metabolism. The chain is Fatty acid metabolism regulator protein from Klebsiella pneumoniae (strain 342).